The chain runs to 361 residues: D-alanine--D-alanine ligase (361 aa).

An ATP-grasp domain is found at 149–353 (KKLMAAEGLP…YEELLDVLVQ (205 aa)). An ATP-binding site is contributed by 176–231 (KKLLGLPVFVKPARGGSSIGISKVSRWEDLPAAVDLARQHDEKVIVESEIVGPEVE). Mg(2+) contacts are provided by aspartate 308, glutamate 320, and asparagine 322.

Belongs to the D-alanine--D-alanine ligase family. Requires Mg(2+) as cofactor. The cofactor is Mn(2+).

The protein localises to the cytoplasm. The catalysed reaction is 2 D-alanine + ATP = D-alanyl-D-alanine + ADP + phosphate + H(+). Its pathway is cell wall biogenesis; peptidoglycan biosynthesis. Functionally, cell wall formation. The polypeptide is D-alanine--D-alanine ligase (Corynebacterium efficiens (strain DSM 44549 / YS-314 / AJ 12310 / JCM 11189 / NBRC 100395)).